We begin with the raw amino-acid sequence, 318 residues long: Ubiquitin-like domain-containing CTD phosphatase 1 (318 aa).

A Ubiquitin-like domain is found at 3–81 (LPIIVKWGGQ…IMMMGTREES (79 aa)). N6-acetyllysine is present on K117. In terms of domain architecture, FCP1 homology spans 133–294 (PREGKKLLVL…VKLTQYLKEI (162 aa)). Residues D143, D145, and D253 each contribute to the Mg(2+) site.

The cofactor is Mg(2+).

The protein localises to the nucleus. It carries out the reaction O-phospho-L-seryl-[protein] + H2O = L-seryl-[protein] + phosphate. The enzyme catalyses O-phospho-L-threonyl-[protein] + H2O = L-threonyl-[protein] + phosphate. In terms of biological role, dephosphorylates 26S nuclear proteasomes, thereby decreasing their proteolytic activity. Recruited to the 19S regulatory particle of the 26S proteasome through its interaction with 19S component PSMD2/RPN1. Once recruited, dephosphorylates 19S component PSMC2/RPT1 which impairs PSMC2 ATPase activity and disrupts 26S proteasome assembly. Has also been reported to stimulate the proteolytic activity of the 26S proteasome. This is Ubiquitin-like domain-containing CTD phosphatase 1 (Ublcp1) from Rattus norvegicus (Rat).